A 117-amino-acid chain; its full sequence is Holo-[acyl-carrier-protein] synthase (117 aa).

2 residues coordinate Mg(2+): aspartate 8 and glutamate 58.

It belongs to the P-Pant transferase superfamily. AcpS family. It depends on Mg(2+) as a cofactor.

It is found in the cytoplasm. The catalysed reaction is apo-[ACP] + CoA = holo-[ACP] + adenosine 3',5'-bisphosphate + H(+). Its function is as follows. Transfers the 4'-phosphopantetheine moiety from coenzyme A to a Ser of acyl-carrier-protein. This is Holo-[acyl-carrier-protein] synthase from Latilactobacillus sakei subsp. sakei (strain 23K) (Lactobacillus sakei subsp. sakei).